Reading from the N-terminus, the 313-residue chain is Protoheme IX farnesyltransferase (313 aa).

9 helical membrane-spanning segments follow: residues 33-53 (IALMKLRVVELLLVSTVPVML), 59-79 (MPSWWLIAVTLLAGTLSAGSA), 107-127 (VEPAQALRFGIALGIISTLMF), 129-149 (LLVNWTSAVLSVGAIAFYVFV), 162-182 (IVIGGAAGCFPVLIGWSAVTG), 188-208 (AVLLFAVVFFWTPPHFWALAI), 212-232 (DDYAAAGVPMLPVVATLEVVT), 252-272 (VADIGLVYLVPAVLLGAWFVA), and 292-312 (LFHMSITYLTLLFAALAAAAL).

This sequence belongs to the UbiA prenyltransferase family. Protoheme IX farnesyltransferase subfamily.

Its subcellular location is the cell membrane. The catalysed reaction is heme b + (2E,6E)-farnesyl diphosphate + H2O = Fe(II)-heme o + diphosphate. It functions in the pathway porphyrin-containing compound metabolism; heme O biosynthesis; heme O from protoheme: step 1/1. In terms of biological role, converts heme B (protoheme IX) to heme O by substitution of the vinyl group on carbon 2 of heme B porphyrin ring with a hydroxyethyl farnesyl side group. This Parafrankia sp. (strain EAN1pec) protein is Protoheme IX farnesyltransferase.